We begin with the raw amino-acid sequence, 107 residues long: Protein beta (107 aa).

This Bovine ephemeral fever virus (strain BB7721) (BEFV) protein is Protein beta (beta).